Reading from the N-terminus, the 327-residue chain is Undecaprenyl-phosphate 4-deoxy-4-formamido-L-arabinose transferase (327 aa).

Residues M1 to L235 lie on the Cytoplasmic side of the membrane. Residues L236 to V256 traverse the membrane as a helical segment. The Periplasmic portion of the chain corresponds to L257–G269. A helical transmembrane segment spans residues V270 to L290. The Cytoplasmic portion of the chain corresponds to L291–Q327.

This sequence belongs to the glycosyltransferase 2 family.

The protein resides in the cell inner membrane. The enzyme catalyses UDP-4-deoxy-4-formamido-beta-L-arabinose + di-trans,octa-cis-undecaprenyl phosphate = 4-deoxy-4-formamido-alpha-L-arabinopyranosyl di-trans,octa-cis-undecaprenyl phosphate + UDP. The protein operates within glycolipid biosynthesis; 4-amino-4-deoxy-alpha-L-arabinose undecaprenyl phosphate biosynthesis; 4-amino-4-deoxy-alpha-L-arabinose undecaprenyl phosphate from UDP-4-deoxy-4-formamido-beta-L-arabinose and undecaprenyl phosphate: step 1/2. It functions in the pathway bacterial outer membrane biogenesis; lipopolysaccharide biosynthesis. In terms of biological role, catalyzes the transfer of 4-deoxy-4-formamido-L-arabinose from UDP to undecaprenyl phosphate. The modified arabinose is attached to lipid A and is required for resistance to polymyxin and cationic antimicrobial peptides. The polypeptide is Undecaprenyl-phosphate 4-deoxy-4-formamido-L-arabinose transferase (Salmonella newport (strain SL254)).